Reading from the N-terminus, the 308-residue chain is Carbonic anhydrase 6 (308 aa).

The first 17 residues, 1–17 (MRALVLLLSLFLLGGQA), serve as a signal peptide directing secretion. Positions 21–278 (SDWTYSEGAL…LNHRVVESNF (258 aa)) constitute an Alpha-carbonic anhydrase domain. A disulfide bridge connects residues Cys-42 and Cys-224. N-linked (GlcNAc...) asparagine glycosylation occurs at Asn-67. His-85 acts as the Proton donor/acceptor in catalysis. 3 residues coordinate Zn(2+): His-111, His-113, and His-138. Residue 220-221 (TT) coordinates substrate. A glycan (N-linked (GlcNAc...) asparagine) is linked at Asn-256.

The protein belongs to the alpha-carbonic anhydrase family. Requires Zn(2+) as cofactor. Major constituent of saliva.

The protein localises to the secreted. The enzyme catalyses hydrogencarbonate + H(+) = CO2 + H2O. Inhibited by coumarins, sulfonamide derivatives such as acetazolamide (AZA), saccharin and Foscarnet (phosphonoformate trisodium salt). Reversible hydration of carbon dioxide. Its role in saliva is unknown. In Homo sapiens (Human), this protein is Carbonic anhydrase 6 (CA6).